An 82-amino-acid chain; its full sequence is Large ribosomal subunit protein bL31B (82 aa).

It belongs to the bacterial ribosomal protein bL31 family. Type B subfamily. Part of the 50S ribosomal subunit.

This is Large ribosomal subunit protein bL31B from Pectobacterium atrosepticum (strain SCRI 1043 / ATCC BAA-672) (Erwinia carotovora subsp. atroseptica).